Consider the following 375-residue polypeptide: Chaperone protein DnaJ (375 aa).

In terms of domain architecture, J spans 5–70 (DFYEVLGVEK…QKRAQYDQFG (66 aa)). Residues 134-216 (GVEKEVSITK…CKGKGTVRKQ (83 aa)) form a CR-type zinc finger. 8 residues coordinate Zn(2+): Cys-147, Cys-150, Cys-164, Cys-167, Cys-190, Cys-193, Cys-204, and Cys-207. CXXCXGXG motif repeat units follow at residues 147 to 154 (CETCTGTG), 164 to 171 (CPKCNGSG), 190 to 197 (CDMCGGKG), and 204 to 211 (CSDCKGKG).

The protein belongs to the DnaJ family. As to quaternary structure, homodimer. The cofactor is Zn(2+).

The protein resides in the cytoplasm. Participates actively in the response to hyperosmotic and heat shock by preventing the aggregation of stress-denatured proteins and by disaggregating proteins, also in an autonomous, DnaK-independent fashion. Unfolded proteins bind initially to DnaJ; upon interaction with the DnaJ-bound protein, DnaK hydrolyzes its bound ATP, resulting in the formation of a stable complex. GrpE releases ADP from DnaK; ATP binding to DnaK triggers the release of the substrate protein, thus completing the reaction cycle. Several rounds of ATP-dependent interactions between DnaJ, DnaK and GrpE are required for fully efficient folding. Also involved, together with DnaK and GrpE, in the DNA replication of plasmids through activation of initiation proteins. This chain is Chaperone protein DnaJ, found in Clostridium tetani (strain Massachusetts / E88).